Consider the following 653-residue polypeptide: MDPNGSGAGPESHDAAFHAAPDRQRLENVVIRFAGDSGDGMQLTGDRFTSEAALFGNDLATQPNYPAEIRAPAGTLPGVSSFQIQIADYDILTAGDRPDVLVAMNPAALKANIGDLPLGGMVIVNSDEFTKRNLTKVGYVTNPLESGELSDYVVHTVAMTTLTLGAVEAIGASKKDGQRAKNMFALGLLSWMYGRELEHSEAFIREKFARKPEIAEANVLALKAGWNYGETTEAFGTTYEIPPATLPPGEYRQISGNTALAYGIVVAGQLAGLPVVLGSYPITPASDILHELSKHKNFNVVTFQAEDEIGGICAALGAAYGGALGVTSTSGPGISLKSEALGLGVMTELPLLVIDVQRGGPSTGLPTKTEQADLLQALYGRNGESPVAVLAPRSPADCFETALEAVRIAVSYHTPVILLSDGAIANGSEPWRIPDVNALPPIKHTFAKPGEPFQPYARDRETLARQFAIPGTPGLEHRIGGLEAANGSGDISYEPTNHDLMVRLRQAKIDGIHVPDLEVDDPTGDAELLLIGWGSSYGPIGEACRRARRRGTKVAHAHLRYLNPFPANLGEVLRRYPKVVAPELNLGQLAQVLRGKYLVDVQSVTKVKGVSFLADEIGRFIRAALAGRLAELEQDKTLVARLSAATAGAGANG.

The interval Met-1–Pro-21 is disordered. Positions Glu-11–Pro-21 are enriched in basic and acidic residues.

KG oxidoreductase (KOR) is composed of KorA and KorB subunits.

It carries out the reaction 2 oxidized [2Fe-2S]-[ferredoxin] + 2-oxoglutarate + CoA = succinyl-CoA + 2 reduced [2Fe-2S]-[ferredoxin] + CO2 + H(+). It participates in carbohydrate metabolism; tricarboxylic acid cycle. Component of KG oxidoreductase (KOR) that catalyzes the CoA-dependent oxidative decarboxylation of 2-oxoglutarate (alpha-ketoglutarate, KG) to succinyl-CoA. Methyl viologen can act as electron acceptor in vitro; the physiologic electron acceptor is unknown. Is involved in the alternative TCA pathway that functions concurrently with fatty acid beta-oxidation. Since a growing body of evidence indicates that lipids (for example cholesterol and fatty acids) are a predominant growth substrate for M.tuberculosis during infection, flux through KOR likely represents an important step in intermediary metabolism in vivo. KOR-dependent decarboxylation of KG also appears to be an important source of CO(2) in M.tuberculosis metabolism. The chain is 2-oxoglutarate oxidoreductase subunit KorA (korA) from Mycobacterium tuberculosis (strain ATCC 25618 / H37Rv).